The chain runs to 735 residues: DNA replication licensing factor mcm5 (735 aa).

The 207-residue stretch at 332–538 folds into the MCM domain; it reads IYETVAKSIA…RDMTLAKHVM (207 aa). Residue R372 coordinates ADP. The short motif at 513 to 516 is the Arginine finger element; that stretch reads SRFD.

Belongs to the MCM family. In terms of assembly, component of the mcm2-7 complex (RLF-M). The complex forms a toroidal hexameric ring with the proposed subunit order mcm2-mcm6-mcm4-mcm7-mcm3-mcm5. The heterodimer of mmcm3/mcm5 interacts with mcm4, mmcm6, mcm7 and weakly with mcm2. Component of the CMG helicase complex, composed of the mcm2-7 complex, the GINS complex and cdc45.

It localises to the nucleus. It is found in the chromosome. The catalysed reaction is ATP + H2O = ADP + phosphate + H(+). Functionally, acts as a component of the MCM2-7 complex (MCM complex) which is the replicative helicase essential for 'once per cell cycle' DNA replication initiation and elongation in eukaryotic cells. Core component of CDC45-MCM-GINS (CMG) helicase, the molecular machine that unwinds template DNA during replication, and around which the replisome is built. The active ATPase sites in the MCM2-7 ring are formed through the interaction surfaces of two neighboring subunits such that a critical structure of a conserved arginine finger motif is provided in trans relative to the ATP-binding site of the Walker A box of the adjacent subunit. The six ATPase active sites, however, are likely to contribute differentially to the complex helicase activity. This is DNA replication licensing factor mcm5 from Xenopus tropicalis (Western clawed frog).